The primary structure comprises 236 residues: NAP1-binding protein 2 (236 aa).

Phosphoserine is present on Ser102. Positions 110–171 constitute an SH3 domain; the sequence is IVNQRAVALY…PEEFVSYIQP (62 aa). Ser196 and Ser235 each carry phosphoserine.

As to quaternary structure, interacts with PBS2 and PTC1.

The protein localises to the cytoplasm. Functionally, negatively regulates the high-osmolarity glycerol (HOG) pathway through its negative regulation of the HOG1 kinase activity. Mediates the binding between the PTC1 phosphatase and the PBS2 MAP/ERK kinase (MEK). With PTC1, regulates endoplasmic reticulum inheritance through the cell wall integrity (CWI) MAPK pathway by modulating the MAPK, SLT2. The sequence is that of NAP1-binding protein 2 (NBP2) from Saccharomyces cerevisiae (strain ATCC 204508 / S288c) (Baker's yeast).